A 450-amino-acid chain; its full sequence is Proline--tRNA ligase (450 aa).

The protein belongs to the class-II aminoacyl-tRNA synthetase family. ProS type 2 subfamily. In terms of assembly, homodimer.

The protein localises to the cytoplasm. The catalysed reaction is tRNA(Pro) + L-proline + ATP = L-prolyl-tRNA(Pro) + AMP + diphosphate. In terms of biological role, catalyzes the attachment of proline to tRNA(Pro) in a two-step reaction: proline is first activated by ATP to form Pro-AMP and then transferred to the acceptor end of tRNA(Pro). This Paracoccus denitrificans (strain Pd 1222) protein is Proline--tRNA ligase.